The sequence spans 543 residues: Malate synthase (543 aa).

The active-site Proton acceptor is the Arg-162. Asp-449 (proton donor) is an active-site residue.

Belongs to the malate synthase family.

It carries out the reaction glyoxylate + acetyl-CoA + H2O = (S)-malate + CoA + H(+). It participates in carbohydrate metabolism; glyoxylate cycle; (S)-malate from isocitrate: step 2/2. In Dictyostelium discoideum (Social amoeba), this protein is Malate synthase (masA).